A 731-amino-acid polypeptide reads, in one-letter code: SUN domain-containing protein 2 (731 aa).

Disordered stretches follow at residues Met-1–Ser-69 and Ser-106–Ser-142. Positions Met-1 to Leu-128 are LMNA-binding. Over Met-1–Ser-226 the chain is Nuclear. Ser-12 is modified (phosphoserine). Over residues Gly-18–Gly-33 the composition is skewed to low complexity. Phosphoserine occurs at positions 39 and 55. Thr-117 carries the post-translational modification Phosphothreonine. Phosphoserine is present on residues Ser-120, Ser-123, and Ser-147. A helical transmembrane segment spans residues Phe-227–Phe-247. Over Tyr-248–His-731 the chain is Perinuclear space. Coiled coils occupy residues Gln-396–Glu-452 and Arg-486–Arg-519. The tract at residues Ala-521–His-731 is sufficient for interaction with SYNE1 and SYNE2. In terms of domain architecture, SUN spans Gly-569–Ala-730. Residue Asn-650 is glycosylated (N-linked (GlcNAc...) asparagine).

Core component of the LINC complex which is composed of inner nuclear membrane SUN domain-containing proteins coupled to outer nuclear membrane KASH domain-containing nesprins. SUN and KASH domain-containing proteins seem to bind each other promiscuously; however, differentially expression of LINC complex constituents is giving rise to specific assemblies. At least SUN1/2-containing core LINC complexes are proposed to be hexameric composed of three protomers of each KASH and SUN domain-containing protein. Interacts with SYNE2; the SUN2:SYNE2/KASH2 LINC complex is a heterohexamer; the homotrimeric cloverleave-like conformation of the SUN domain is a prerequisite for LINC complex formation in which three separate SYNE2/KASH2 peptides bind at the interface of adjacent SUN domains. Component of a probable SUN2:KASH5 LINC complex. Interacts with SYNE1 and SYNE3; probably forming respective LINC complexes. Interacts with A-type lamin. Interaction with lamins B1 and C is hardly detectable. Interacts with EMD. Interacts with RAB5A. Interacts with TMEM43 and TMEM201. Interacts with IRAG2. Post-translationally, the disulfide bond with SYNE2 is required for stability of the SUN2:SYNE2/KASH2 LINC complex under tensile forces though not required for the interaction. The disulfide bond is proposed to be conserved in LINC complexes involved in force transmission. In terms of tissue distribution, highly expressed in heart, placenta and muscle.

Its subcellular location is the nucleus inner membrane. The protein resides in the nucleus envelope. The protein localises to the endosome membrane. Its function is as follows. As a component of the LINC (LInker of Nucleoskeleton and Cytoskeleton) complex, involved in the connection between the nuclear lamina and the cytoskeleton. The nucleocytoplasmic interactions established by the LINC complex play an important role in the transmission of mechanical forces across the nuclear envelope and in nuclear movement and positioning. Specifically, SYNE2 and SUN2 assemble in arrays of transmembrane actin-associated nuclear (TAN) lines which are bound to F-actin cables and couple the nucleus to retrograde actin flow during actin-dependent nuclear movement. Required for interkinetic nuclear migration (INM) and essential for nucleokinesis and centrosome-nucleus coupling during radial neuronal migration in the cerebral cortex and during glial migration. Required for nuclear migration in retinal photoreceptor progenitors implicating association with cytoplasmic dynein-dynactin and kinesin motor complexes, and probably B-type lamins; SUN1 and SUN2 seem to act redundantly. The SUN1/2:KASH5 LINC complex couples telomeres to microtubules during meiosis; SUN1 and SUN2 seem to act at least partial redundantly. Anchors chromosome movement in the prophase of meiosis and is involved in selective gene expression of coding and non-coding RNAs needed for gametogenesis. Required for telomere attachment to nuclear envelope and gametogenesis. May also function on endocytic vesicles as a receptor for Rab5-GDP and participate in the activation of Rab5. In Mus musculus (Mouse), this protein is SUN domain-containing protein 2.